The primary structure comprises 937 residues: Protein translocase subunit SecA (937 aa).

ATP is bound by residues glutamine 90, glycine 108–threonine 112, and aspartate 509.

It belongs to the SecA family. As to quaternary structure, monomer and homodimer. Part of the essential Sec protein translocation apparatus which comprises SecA, SecYEG and auxiliary proteins SecDF. Other proteins may also be involved.

Its subcellular location is the cell inner membrane. It localises to the cellular thylakoid membrane. The protein localises to the cytoplasm. The catalysed reaction is ATP + H2O + cellular proteinSide 1 = ADP + phosphate + cellular proteinSide 2.. Part of the Sec protein translocase complex. Interacts with the SecYEG preprotein conducting channel. Has a central role in coupling the hydrolysis of ATP to the transfer of proteins into and across the cell membrane, serving as an ATP-driven molecular motor driving the stepwise translocation of polypeptide chains across the membrane. Functionally, probably participates in protein translocation into and across both the cytoplasmic and thylakoid membranes in cyanobacterial cells. This chain is Protein translocase subunit SecA, found in Synechococcus sp. (strain CC9902).